A 744-amino-acid chain; its full sequence is Phosphoribosylformylglycinamidine synthase subunit PurL (744 aa).

The active site involves histidine 45. Tyrosine 48 and lysine 87 together coordinate ATP. Position 89 (glutamate 89) interacts with Mg(2+). Residues 90–93 (SHNH) and arginine 112 contribute to the substrate site. Histidine 91 (proton acceptor) is an active-site residue. Aspartate 113 contributes to the Mg(2+) binding site. Glutamine 236 contributes to the substrate binding site. Mg(2+) is bound at residue aspartate 264. A substrate-binding site is contributed by 308–310 (ESQ). The ATP site is built by asparagine 492 and glycine 529. A Mg(2+)-binding site is contributed by asparagine 530. A substrate-binding site is contributed by serine 532.

Belongs to the FGAMS family. Monomer. Part of the FGAM synthase complex composed of 1 PurL, 1 PurQ and 2 PurS subunits.

It localises to the cytoplasm. The catalysed reaction is N(2)-formyl-N(1)-(5-phospho-beta-D-ribosyl)glycinamide + L-glutamine + ATP + H2O = 2-formamido-N(1)-(5-O-phospho-beta-D-ribosyl)acetamidine + L-glutamate + ADP + phosphate + H(+). Its pathway is purine metabolism; IMP biosynthesis via de novo pathway; 5-amino-1-(5-phospho-D-ribosyl)imidazole from N(2)-formyl-N(1)-(5-phospho-D-ribosyl)glycinamide: step 1/2. Part of the phosphoribosylformylglycinamidine synthase complex involved in the purines biosynthetic pathway. Catalyzes the ATP-dependent conversion of formylglycinamide ribonucleotide (FGAR) and glutamine to yield formylglycinamidine ribonucleotide (FGAM) and glutamate. The FGAM synthase complex is composed of three subunits. PurQ produces an ammonia molecule by converting glutamine to glutamate. PurL transfers the ammonia molecule to FGAR to form FGAM in an ATP-dependent manner. PurS interacts with PurQ and PurL and is thought to assist in the transfer of the ammonia molecule from PurQ to PurL. The sequence is that of Phosphoribosylformylglycinamidine synthase subunit PurL from Erythrobacter litoralis (strain HTCC2594).